Here is a 73-residue protein sequence, read N- to C-terminus: Beta-defensin 50 (73 aa).

The signal sequence occupies residues 1-23; sequence MKTLCFLLLTSGLLYLMVKGVGS. Cystine bridges form between Cys-34–Cys-63 and Cys-46–Cys-64.

This sequence belongs to the beta-defensin family. In terms of tissue distribution, highly expressed in prostate. Not expressed in uterus, epididymis, ovary, testis, spleen, submaxillary gland, thymus, thyroid, pancreas, smooth muscle, skeletal muscle, heart, kidney, lung, liver, eye and brain.

It is found in the secreted. Its function is as follows. Has bactericidal activity. This is Beta-defensin 50 (Defb50) from Mus musculus (Mouse).